A 312-amino-acid polypeptide reads, in one-letter code: Flavonol 3-sulfotransferase (312 aa).

Position 59-64 (59-64 (KSGTTW)) interacts with 3'-phosphoadenylyl sulfate. Catalysis depends on His-119, which acts as the Proton acceptor. 3'-phosphoadenylyl sulfate is bound by residues Arg-141, Ser-149, Tyr-207, and 277 to 279 (RKG).

Belongs to the sulfotransferase 1 family. As to expression, highest in shoot tips and lowest in mature leaves and roots.

It is found in the cytoplasm. Sulfotransferase that utilizes 3'-phospho-5'-adenylyl sulfate (PAPS) as sulfonate donor to catalyze the sulfate conjugation of quercetin, rhamnetin and isorhamnetin but not kaempferol. O-sulfation of position 3 of flavonol. May play a role in auxin transport. This Flaveria bidentis (Coastal plain yellowtops) protein is Flavonol 3-sulfotransferase.